Here is a 267-residue protein sequence, read N- to C-terminus: Tryptophan synthase alpha chain (267 aa).

Residues Glu49 and Asp60 each act as proton acceptor in the active site.

The protein belongs to the TrpA family. In terms of assembly, tetramer of two alpha and two beta chains.

The catalysed reaction is (1S,2R)-1-C-(indol-3-yl)glycerol 3-phosphate + L-serine = D-glyceraldehyde 3-phosphate + L-tryptophan + H2O. It participates in amino-acid biosynthesis; L-tryptophan biosynthesis; L-tryptophan from chorismate: step 5/5. The alpha subunit is responsible for the aldol cleavage of indoleglycerol phosphate to indole and glyceraldehyde 3-phosphate. This is Tryptophan synthase alpha chain from Geotalea uraniireducens (strain Rf4) (Geobacter uraniireducens).